The sequence spans 246 residues: N-alpha-acetyltransferase 11 (246 aa).

An interaction with NAA15 region spans residues 1–58 (MNIRNARPEDLMNMQHCNLLCLPENYQMKYYFYHGLSWPQLSYIAEDEDGKIVGYVLA). An N-acetyltransferase domain is found at 1 to 152 (MNIRNARPED…DAYAMKRDLA (152 aa)). The segment at 175–246 (EENQEAQDST…DSSEYLDSTS (72 aa)) is disordered. Residues 230 to 246 (SHSTDVQDSSEYLDSTS) are compositionally biased toward polar residues.

Belongs to the acetyltransferase family. ARD1 subfamily. As to quaternary structure, component of the N-terminal acetyltransferase A (NatA) complex composed of NAA11 and NAA15. Interacts with HIF1A.

Its subcellular location is the cytoplasm. The protein resides in the nucleus. It catalyses the reaction N-terminal glycyl-[protein] + acetyl-CoA = N-terminal N(alpha)-acetylglycyl-[protein] + CoA + H(+). The enzyme catalyses N-terminal L-alanyl-[protein] + acetyl-CoA = N-terminal N(alpha)-acetyl-L-alanyl-[protein] + CoA + H(+). It carries out the reaction N-terminal L-seryl-[protein] + acetyl-CoA = N-terminal N(alpha)-acetyl-L-seryl-[protein] + CoA + H(+). The catalysed reaction is N-terminal L-valyl-[protein] + acetyl-CoA = N-terminal N(alpha)-acetyl-L-valyl-[protein] + CoA + H(+). It catalyses the reaction N-terminal L-cysteinyl-[protein] + acetyl-CoA = N-terminal N(alpha)-acetyl-L-cysteinyl-[protein] + CoA + H(+). The enzyme catalyses N-terminal L-threonyl-[protein] + acetyl-CoA = N-terminal N(alpha)-acetyl-L-threonyl-[protein] + CoA + H(+). Functionally, displays alpha (N-terminal) acetyltransferase activity. Proposed alternative catalytic subunit of the N-terminal acetyltransferase A (NatA) complex. The protein is N-alpha-acetyltransferase 11 (Naa11) of Rattus norvegicus (Rat).